The chain runs to 159 residues: 2-C-methyl-D-erythritol 2,4-cyclodiphosphate synthase (159 aa).

The a divalent metal cation site is built by aspartate 8 and histidine 10. 4-CDP-2-C-methyl-D-erythritol 2-phosphate is bound by residues 8–10 and 34–35; these read DVH and HS. Histidine 42 serves as a coordination point for a divalent metal cation. Residues 56–58, 61–65, 100–106, 132–135, phenylalanine 139, and arginine 142 contribute to the 4-CDP-2-C-methyl-D-erythritol 2-phosphate site; these read DIG, FPDTD, AQAPKML, and TTTE.

This sequence belongs to the IspF family. As to quaternary structure, homotrimer. Requires a divalent metal cation as cofactor.

It catalyses the reaction 4-CDP-2-C-methyl-D-erythritol 2-phosphate = 2-C-methyl-D-erythritol 2,4-cyclic diphosphate + CMP. Its pathway is isoprenoid biosynthesis; isopentenyl diphosphate biosynthesis via DXP pathway; isopentenyl diphosphate from 1-deoxy-D-xylulose 5-phosphate: step 4/6. Involved in the biosynthesis of isopentenyl diphosphate (IPP) and dimethylallyl diphosphate (DMAPP), two major building blocks of isoprenoid compounds. Catalyzes the conversion of 4-diphosphocytidyl-2-C-methyl-D-erythritol 2-phosphate (CDP-ME2P) to 2-C-methyl-D-erythritol 2,4-cyclodiphosphate (ME-CPP) with a corresponding release of cytidine 5-monophosphate (CMP). This is 2-C-methyl-D-erythritol 2,4-cyclodiphosphate synthase from Salmonella typhi.